Consider the following 175-residue polypeptide: ADP-ribosylation factor 6 (175 aa).

A lipid anchor (N-myristoyl glycine) is attached at Gly2. Lys3 carries the N6-myristoyl lysine lipid modification. Residues 23–28 (AAGKTT), 41–44 (TIPT), 63–67 (DVGGQ), 122–125 (NKQD), and 155–156 (CA) contribute to the GTP site.

Belongs to the small GTPase superfamily. Arf family.

Its subcellular location is the cytoplasm. The protein localises to the cytosol. The protein resides in the cell membrane. It localises to the endosome membrane. It is found in the recycling endosome membrane. Its subcellular location is the cell projection. The protein localises to the filopodium membrane. The protein resides in the ruffle. It localises to the cleavage furrow. It is found in the midbody. Its subcellular location is the midbody ring. The enzyme catalyses GTP + H2O = GDP + phosphate + H(+). Functionally, GTP-binding protein involved in protein trafficking; regulates endocytic recycling and cytoskeleton remodeling. May modulate vesicle budding and uncoating within the Golgi apparatus. May contribute to the regulation of dendritic branching, filopodia extension and dendritic spine development. The chain is ADP-ribosylation factor 6 (ARF6) from Gallus gallus (Chicken).